We begin with the raw amino-acid sequence, 70 residues long: Conotoxin Im23.4 (70 aa).

The N-terminal stretch at 1-22 (MIMRMTLTLFVLVVMTAASASG) is a signal peptide. A propeptide spanning residues 23–30 (DALTEAKR) is cleaved from the precursor. 3 disulfides stabilise this stretch: C34–C41, C45–C53, and C54–C69.

The protein belongs to the conotoxin K superfamily. Expressed by the venom duct.

The protein resides in the secreted. Probable neurotoxin. The chain is Conotoxin Im23.4 from Conus imperialis (Imperial cone).